A 543-amino-acid polypeptide reads, in one-letter code: Allantoate permease (543 aa).

At 1–80 (MSADASTNSN…PEEDRKLRWK (80 aa)) the chain is on the cytoplasmic side. The chain crosses the membrane as a helical span at residues 81 to 97 (IDYCMFPLMCILYAVQF). Over 98 to 123 (MDKISTSSAAVMGLRTDLKMHGDQYS) the chain is Extracellular. The helical transmembrane segment at 124–145 (WVTSAFYFGYLFMNLGPVQFIF) threads the bilayer. The Cytoplasmic segment spans residues 146 to 154 (QRTSHMSKM). The chain crosses the membrane as a helical span at residues 155 to 171 (LAVFIVIWGMLLALHAA). Over 172–178 (PTVKYPS) the chain is Extracellular. The helical transmembrane segment at 179–200 (FIVLRVLLGCAESVVTPCFTII) threads the bilayer. At 201–213 (TAQYWKTEEQFTR) the chain is on the cytoplasmic side. A helical transmembrane segment spans residues 214-237 (VSIWFGMNGLGSILINAIAYGVYI). Topologically, residues 238–248 (HQDSYAIKGWR) are extracellular. The helical transmembrane segment at 249–269 (TLFVITGVITIFIGILIFLWI) threads the bilayer. Topologically, residues 270-317 (PDDPSKARFLSKREKLMVVQRIRSNQQGFGNHEIKKYQIIEALKDVRT) are cytoplasmic. Residues 318-342 (WLYFLFTVSSNIPNGGISSFMSILL) form a helical membrane-spanning segment. Residues 343 to 352 (NSDFGYSSKE) lie on the Extracellular side of the membrane. Residues 353–377 (TLLMGLPTGAVELVGCPLFGILAVY) traverse the membrane as a helical segment. At 378–389 (AANKKIPFWKYK) the chain is on the cytoplasmic side. A helical membrane pass occupies residues 390–411 (LSWAIFAAVLALIASCMLGFAT). Topologically, residues 412 to 417 (NSKKAR) are extracellular. A helical transmembrane segment spans residues 418 to 435 (LAGAYLWYISPVSFICVL). Topologically, residues 436-453 (SNISANSSGYSKKWTVSS) are cytoplasmic. The chain crosses the membrane as a helical span at residues 454 to 472 (INLVAYAAANLAGPQTFIA). At 473–482 (KQAPKYHGAK) the chain is on the extracellular side. The helical transmembrane segment at 483–504 (VAMVVCYAVMIVLLSILLIVNL) threads the bilayer. Over 505–543 (RENKRRDKIAAERGFPEETENLEFSDLTDFENPNFRYTL) the chain is Cytoplasmic.

Belongs to the major facilitator superfamily. Allantoate permease family.

The protein resides in the membrane. Functionally, component of the allantoate transport system. This is Allantoate permease (DAL5) from Saccharomyces cerevisiae (strain ATCC 204508 / S288c) (Baker's yeast).